The primary structure comprises 132 residues: Small ribosomal subunit protein uS8 (132 aa).

Belongs to the universal ribosomal protein uS8 family. As to quaternary structure, part of the 30S ribosomal subunit. Contacts proteins S5 and S12.

Its function is as follows. One of the primary rRNA binding proteins, it binds directly to 16S rRNA central domain where it helps coordinate assembly of the platform of the 30S subunit. The sequence is that of Small ribosomal subunit protein uS8 from Halalkalibacterium halodurans (strain ATCC BAA-125 / DSM 18197 / FERM 7344 / JCM 9153 / C-125) (Bacillus halodurans).